The sequence spans 159 residues: Ribosomal RNA large subunit methyltransferase H (159 aa).

S-adenosyl-L-methionine is bound by residues leucine 76, glycine 108, and 127-132; that span reads FSKMTF.

This sequence belongs to the RNA methyltransferase RlmH family. Homodimer.

The protein resides in the cytoplasm. The catalysed reaction is pseudouridine(1915) in 23S rRNA + S-adenosyl-L-methionine = N(3)-methylpseudouridine(1915) in 23S rRNA + S-adenosyl-L-homocysteine + H(+). In terms of biological role, specifically methylates the pseudouridine at position 1915 (m3Psi1915) in 23S rRNA. This chain is Ribosomal RNA large subunit methyltransferase H, found in Geobacillus kaustophilus (strain HTA426).